The sequence spans 236 residues: Small ribosomal subunit protein uS3 (236 aa).

In terms of domain architecture, KH type-2 spans 39 to 107 (IREFLTEELK…DTSLNIVEVR (69 aa)). The tract at residues 214–236 (ASERRAVEGDNQGSSSNRRRENA) is disordered.

It belongs to the universal ribosomal protein uS3 family. Part of the 30S ribosomal subunit. Forms a tight complex with proteins S10 and S14.

Binds the lower part of the 30S subunit head. Binds mRNA in the 70S ribosome, positioning it for translation. The chain is Small ribosomal subunit protein uS3 from Brucella melitensis biotype 1 (strain ATCC 23456 / CCUG 17765 / NCTC 10094 / 16M).